Here is a 264-residue protein sequence, read N- to C-terminus: Glutamate racemase (264 aa).

Residues 9 to 10 (DS) and 41 to 42 (YG) each bind substrate. C72 (proton donor/acceptor) is an active-site residue. Position 73-74 (73-74 (NT)) interacts with substrate. The active-site Proton donor/acceptor is C183. Residue 184–185 (TH) participates in substrate binding.

It belongs to the aspartate/glutamate racemases family.

It carries out the reaction L-glutamate = D-glutamate. It participates in cell wall biogenesis; peptidoglycan biosynthesis. Its function is as follows. Provides the (R)-glutamate required for cell wall biosynthesis. In Geobacillus kaustophilus (strain HTA426), this protein is Glutamate racemase.